The following is a 64-amino-acid chain: SPbeta prophage-derived uncharacterized protein YopV (64 aa).

The sequence is that of SPbeta prophage-derived uncharacterized protein YopV (yopV) from Bacillus subtilis (strain 168).